Reading from the N-terminus, the 49-residue chain is Large ribosomal subunit protein bL33A (49 aa).

The protein belongs to the bacterial ribosomal protein bL33 family.

This Limosilactobacillus reuteri subsp. reuteri (strain JCM 1112) (Lactobacillus reuteri) protein is Large ribosomal subunit protein bL33A.